The following is a 370-amino-acid chain: tRNA-specific 2-thiouridylase MnmA (370 aa).

Residues 24-31 (AMSGGVDS) and leucine 50 each bind ATP. Catalysis depends on cysteine 118, which acts as the Nucleophile. Cysteine 118 and cysteine 214 are oxidised to a cystine. Glycine 142 serves as a coordination point for ATP. The tract at residues 164-166 (KDQ) is interaction with tRNA. Catalysis depends on cysteine 214, which acts as the Cysteine persulfide intermediate.

It belongs to the MnmA/TRMU family.

The protein localises to the cytoplasm. The catalysed reaction is S-sulfanyl-L-cysteinyl-[protein] + uridine(34) in tRNA + AH2 + ATP = 2-thiouridine(34) in tRNA + L-cysteinyl-[protein] + A + AMP + diphosphate + H(+). Functionally, catalyzes the 2-thiolation of uridine at the wobble position (U34) of tRNA, leading to the formation of s(2)U34. This Ehrlichia ruminantium (strain Welgevonden) protein is tRNA-specific 2-thiouridylase MnmA.